We begin with the raw amino-acid sequence, 631 residues long: KIF-binding protein (631 aa).

The span at E60 to C70 shows a compositional bias: acidic residues. A disordered region spans residues E60–F88.

It belongs to the KIF-binding protein family. In terms of tissue distribution, at 30 hpf, primarily expressed in central and peripheral neurons.

The protein localises to the cytoplasm. It is found in the cytoskeleton. In terms of biological role, activator of KIF1B plus-end-directed microtubule motor activity. Required for organization of axonal microtubules, and axonal outgrowth and maintenance during peripheral and central nervous system development. The sequence is that of KIF-binding protein (kifbp) from Danio rerio (Zebrafish).